The chain runs to 159 residues: Urease accessory protein UreE (159 aa).

The interval 140–159 (GAYHGTGHHHHGHGHDPHHG) is disordered.

This sequence belongs to the UreE family.

The protein localises to the cytoplasm. In terms of biological role, involved in urease metallocenter assembly. Binds nickel. Probably functions as a nickel donor during metallocenter assembly. The sequence is that of Urease accessory protein UreE from Sinorhizobium fredii (strain NBRC 101917 / NGR234).